A 159-amino-acid polypeptide reads, in one-letter code: Nucleotide-binding protein PST_3153 (159 aa).

This sequence belongs to the YajQ family.

Nucleotide-binding protein. The protein is Nucleotide-binding protein PST_3153 of Stutzerimonas stutzeri (strain A1501) (Pseudomonas stutzeri).